The sequence spans 88 residues: Small ribosomal subunit protein bS20 (88 aa).

The disordered stretch occupies residues 1–20 (MANTAQARKRARQAVVQNAH).

The protein belongs to the bacterial ribosomal protein bS20 family.

In terms of biological role, binds directly to 16S ribosomal RNA. This Ralstonia nicotianae (strain ATCC BAA-1114 / GMI1000) (Ralstonia solanacearum) protein is Small ribosomal subunit protein bS20.